Reading from the N-terminus, the 278-residue chain is Elongation factor Ts (278 aa).

Residues 79 to 82 are involved in Mg(2+) ion dislocation from EF-Tu; the sequence is TDFV.

The protein belongs to the EF-Ts family.

It localises to the cytoplasm. Its function is as follows. Associates with the EF-Tu.GDP complex and induces the exchange of GDP to GTP. It remains bound to the aminoacyl-tRNA.EF-Tu.GTP complex up to the GTP hydrolysis stage on the ribosome. This Borrelia recurrentis (strain A1) protein is Elongation factor Ts.